A 320-amino-acid chain; its full sequence is HPr kinase/phosphorylase (320 aa).

Active-site residues include histidine 139 and lysine 160. 154-161 (GDSGVGKS) provides a ligand contact to ATP. A Mg(2+)-binding site is contributed by serine 161. The active-site Proton acceptor; for phosphorylation activity. Proton donor; for dephosphorylation activity is the aspartate 178. An important for the catalytic mechanism of both phosphorylation and dephosphorylation region spans residues 202-211 (MEIRGIGIID). Glutamate 203 contacts Mg(2+). Arginine 244 is an active-site residue. The segment at 265–270 (PVKTGR) is important for the catalytic mechanism of dephosphorylation.

It belongs to the HPrK/P family. In terms of assembly, homohexamer. The cofactor is Mg(2+).

The enzyme catalyses [HPr protein]-L-serine + ATP = [HPr protein]-O-phospho-L-serine + ADP + H(+). The catalysed reaction is [HPr protein]-O-phospho-L-serine + phosphate + H(+) = [HPr protein]-L-serine + diphosphate. Functionally, catalyzes the ATP- as well as the pyrophosphate-dependent phosphorylation of a specific serine residue in HPr, a phosphocarrier protein of the phosphoenolpyruvate-dependent sugar phosphotransferase system (PTS). HprK/P also catalyzes the pyrophosphate-producing, inorganic phosphate-dependent dephosphorylation (phosphorolysis) of seryl-phosphorylated HPr (P-Ser-HPr). The two antagonistic activities of HprK/P are regulated by several intracellular metabolites, which change their concentration in response to the absence or presence of rapidly metabolisable carbon sources (glucose, fructose, etc.) in the growth medium. Therefore, by controlling the phosphorylation state of HPr, HPrK/P is a sensor enzyme that plays a major role in the regulation of carbon metabolism and sugar transport: it mediates carbon catabolite repression (CCR), and regulates PTS-catalyzed carbohydrate uptake and inducer exclusion. The protein is HPr kinase/phosphorylase of Limosilactobacillus reuteri (strain DSM 20016) (Lactobacillus reuteri).